The sequence spans 199 residues: Protein-L-isoaspartate O-methyltransferase (199 aa).

Residue S51 is part of the active site.

The protein belongs to the methyltransferase superfamily. L-isoaspartyl/D-aspartyl protein methyltransferase family.

Its subcellular location is the cytoplasm. It carries out the reaction [protein]-L-isoaspartate + S-adenosyl-L-methionine = [protein]-L-isoaspartate alpha-methyl ester + S-adenosyl-L-homocysteine. Functionally, catalyzes the methyl esterification of L-isoaspartyl residues in peptides and proteins that result from spontaneous decomposition of normal L-aspartyl and L-asparaginyl residues. It plays a role in the repair and/or degradation of damaged proteins. The polypeptide is Protein-L-isoaspartate O-methyltransferase (Fervidobacterium nodosum (strain ATCC 35602 / DSM 5306 / Rt17-B1)).